The sequence spans 488 residues: Facilitated trehalose transporter Tret1-2 homolog (488 aa).

Over 1–28 the chain is Cytoplasmic; it reads MKILMRADTHVSYSVPAEGPKANFTFSQ. A helical transmembrane segment spans residues 29 to 49; sequence VLAALSVSLCSLVVGFVSAYT. Residues 50 to 72 are Extracellular-facing; that stretch reads SPALVSMTDRTITSFEVTKDAGS. A helical membrane pass occupies residues 73-93; it reads WVGGIMPLAALAGGITGGPLI. Over 94-105 the chain is Cytoplasmic; the sequence is EYLGRRTTILAT. A helical membrane pass occupies residues 106–126; it reads AVPFIVSSLLIACAVNVIMIL. Residues 127 to 129 are Extracellular-facing; sequence CGR. Residues 130–150 form a helical membrane-spanning segment; the sequence is FLTGFCVGIASLSLPVYLGET. The Cytoplasmic portion of the chain corresponds to 151 to 160; it reads LQPEVRGTLG. A helical membrane pass occupies residues 161–181; sequence LLPTALGNIGILVCYVAGSFM. Asn-182 carries an N-linked (GlcNAc...) asparagine glycan. At 182 to 184 the chain is on the extracellular side; the sequence is NWS. Residues 185-205 traverse the membrane as a helical segment; the sequence is MLAFLGAALPVPFLILMIIIP. Residues 206–268 are Cytoplasmic-facing; the sequence is ETPRWFVNRG…ELFKRINLKP (63 aa). The helical transmembrane segment at 269–289 threads the bilayer; the sequence is LSISLGLMFFQQFSGINAVIF. The Extracellular segment spans residues 290–305; it reads YTVQIFKDAGSTIDSN. A helical membrane pass occupies residues 306–326; it reads LCTIIVGIVNFFATFMGILLI. The Cytoplasmic portion of the chain corresponds to 327-332; that stretch reads DRLGRK. The helical transmembrane segment at 333 to 353 threads the bilayer; it reads ILLYISDIAMILTLSILGGFF. Residues 354–372 lie on the Extracellular side of the membrane; the sequence is YCKAHGPDVSHLGWLPLTC. A helical membrane pass occupies residues 373–393; it reads FVIYILGFSLGFGPIPWLMMG. Residues 394 to 402 lie on the Cytoplasmic side of the membrane; it reads EILPAKIRG. The chain crosses the membrane as a helical span at residues 403-423; the sequence is PAASVVTAFNWFCTFVVTKTF. The Extracellular portion of the chain corresponds to 424 to 433; it reads QDLTVAMGAH. Residues 434-454 form a helical membrane-spanning segment; sequence GAFWLFGVVCIVGLFFVIICV. Residues 455–488 lie on the Cytoplasmic side of the membrane; it reads PETRGKSLEEIERKMMGRVPISAVVNIKPFSFNM.

It belongs to the major facilitator superfamily. Sugar transporter (TC 2.A.1.1) family. Trehalose transporter subfamily.

The protein localises to the cell membrane. In terms of biological role, fails to transport trehalose. This chain is Facilitated trehalose transporter Tret1-2 homolog, found in Drosophila simulans (Fruit fly).